Here is an 86-residue protein sequence, read N- to C-terminus: MAHKKGSGSTRNGRDSNSKRLGVKKYGGEQVTAGNILIRQRGTKVKPGQNVGKGKDDTLFSLIDGFVLFEKSNQKQKTISVYSAKK.

Residues 1 to 27 (MAHKKGSGSTRNGRDSNSKRLGVKKYG) form a disordered region.

It belongs to the bacterial ribosomal protein bL27 family.

The protein localises to the plastid. It localises to the chloroplast. This is Large ribosomal subunit protein bL27c from Pyropia yezoensis (Susabi-nori).